The primary structure comprises 744 residues: Tripartite motif-containing protein 2 (744 aa).

Ser10 bears the Phosphoserine mark. The RING-type zinc finger occupies 23–64 (CSICLERYKNPKVLPCLHTFCERCLQNYIPAHSLTLSCPVCR). The segment at 113 to 154 (GKPLSCPNHDGNVMEFYCQSCETAMCRECTEGEHAEHPTVPL) adopts a B box-type zinc-finger fold. The Zn(2+) site is built by Cys118, His121, Cys141, and His146. The stretch at 320 to 421 (TTNAVASETV…IRGSPFKLKV (102 aa)) is one Filamin repeat. Phosphothreonine is present on Thr371. Ser375, Ser424, and Ser428 each carry phosphoserine. The interval 432-462 (EGVKRRVKSPGSGHVKQKAVKRPASMYSTGK) is disordered. NHL repeat units follow at residues 473 to 516 (IFRV…FSND), 520 to 563 (KSRF…FSSD), 564 to 605 (GKFK…FQPN), 609 to 652 (VTRF…FNQE), 656 to 699 (MLKF…FDGS), and 700 to 743 (GSFL…YRYL).

This sequence belongs to the TRIM/RBCC family. Forms homooligomers. Interacts with TRIM3; this interaction reduces TRIM2 activity. Interacts with myosin V; myosin V may not be a substrate for ubiquitination. Interacts with NEFL. Interacts with phosphorylated BCL2L11. Interacts with SIRPA. Post-translationally, RING-type zinc finger-dependent and UBE2D1-dependent autoubiquitination.

It is found in the cytoplasm. The catalysed reaction is S-ubiquitinyl-[E2 ubiquitin-conjugating enzyme]-L-cysteine + [acceptor protein]-L-lysine = [E2 ubiquitin-conjugating enzyme]-L-cysteine + N(6)-ubiquitinyl-[acceptor protein]-L-lysine.. Its pathway is protein modification; protein ubiquitination. In terms of biological role, UBE2D1-dependent E3 ubiquitin-protein ligase that mediates the ubiquitination of NEFL and of phosphorylated BCL2L11. Plays a neuroprotective function. May play a role in neuronal rapid ischemic tolerance. Plays a role in antiviral immunity and limits New World arenavirus infection independently of its ubiquitin ligase activity. The chain is Tripartite motif-containing protein 2 (TRIM2) from Homo sapiens (Human).